Here is a 478-residue protein sequence, read N- to C-terminus: Solute carrier family 49 member 4 (478 aa).

Positions 1 to 27 (MGSGWSSEEEERQPLLGPGLGPAPGAT) are disordered. The Cytoplasmic portion of the chain corresponds to 1 to 51 (MGSGWSSEEEERQPLLGPGLGPAPGATRRGREAAAVLPAAGPSPGRVYGRR). A Di-leucine motif; mediates lysosomal localization motif is present at residues 15–16 (LL). The helical transmembrane segment at 52–72 (WLVLLLFSLLAFAQGLVWNTW) threads the bilayer. The Lumenal portion of the chain corresponds to 73–89 (GPIQNSARQAYSFTGWD). The chain crosses the membrane as a helical span at residues 90-110 (IALLVLWGPIGFLPCFAFMWL). The Cytoplasmic segment spans residues 111 to 117 (LDKRGLR). Residues 118–138 (ITVLLTSFLMVLGTGLRCIPV) traverse the membrane as a helical segment. The Lumenal segment spans residues 139-152 (SDLTLKKRLIHGGQ). The chain crosses the membrane as a helical span at residues 153 to 173 (ILNGLAGPTVMNAAPFLSTTW). The Cytoplasmic portion of the chain corresponds to 174–184 (FSADERATATA). The chain crosses the membrane as a helical span at residues 185–205 (IASMLSYLGGACAFLVGPLVV). The Lumenal segment spans residues 206-229 (PAPNGTAPLLTAESSRDHIKDRIE). An N-linked (GlcNAc...) asparagine glycan is attached at asparagine 209. A helical transmembrane segment spans residues 230–250 (TVLYAEFGVVCLIFSATLAYF). The Cytoplasmic segment spans residues 251-281 (PPRPPLPPSVAAASQRLSYRRSFCRLLSNLR). The helical transmembrane segment at 282 to 302 (FLMIALAYAIPLGVFAGWSGV) threads the bilayer. Residues 303–314 (LDLILTPVHVSQ) lie on the Lumenal side of the membrane. A helical transmembrane segment spans residues 315–335 (VDAGWIGFWSIVGGCVVGIAM). The Cytoplasmic portion of the chain corresponds to 336–347 (ARFADFIRGMLK). The chain crosses the membrane as a helical span at residues 348–368 (LILLLLFSGATLSSTWFTLTC). Over 369–384 (LNSVTHLPLTTVTLYA) the chain is Lumenal. A helical transmembrane segment spans residues 385 to 405 (SCILLGVFLNSSVPIFFELFV). The Cytoplasmic segment spans residues 406-414 (ETVYPVPEG). A helical transmembrane segment spans residues 415 to 435 (ITCGVVTFLSNMFMGVLLFFV). At 436–442 (TFYHTEL) the chain is on the lumenal side. Residues 443-463 (SWFNWCLPGSCLLSLLLILCF) form a helical membrane-spanning segment. Over 464–478 (RESYDRLYLDVVVSV) the chain is Cytoplasmic.

The protein belongs to the major facilitator superfamily. Post-translationally, cleaved in lysosomes by cathepsin L between Leu-214 and Ala-261, generating a N-glycosylated N-terminal and a non-glycosylated C-terminal fragment.

It is found in the lysosome membrane. It catalyses the reaction pyridoxine(out) + n H(+)(out) = pyridoxine(in) + n H(+)(in). Functionally, mediates H(+)-dependent pyridoxine transport. In Rattus norvegicus (Rat), this protein is Solute carrier family 49 member 4 (Slc49a4).